A 167-amino-acid polypeptide reads, in one-letter code: Transmembrane protein 229B (167 aa).

Over Met-1–Tyr-14 the chain is Cytoplasmic. A helical transmembrane segment spans residues Leu-15–Val-35. Topologically, residues Asn-36–Lys-40 are extracellular. The helical transmembrane segment at Phe-41–Glu-61 threads the bilayer. Residues Lys-62–His-72 lie on the Cytoplasmic side of the membrane. The helical transmembrane segment at Ile-73–Leu-93 threads the bilayer. Residues Ile-94 to Asp-109 are Extracellular-facing. Residues Phe-110 to Ile-130 traverse the membrane as a helical segment. At Met-131 to Asp-167 the chain is on the cytoplasmic side.

It belongs to the TMEM229 family.

It localises to the membrane. The polypeptide is Transmembrane protein 229B (TMEM229B) (Gallus gallus (Chicken)).